The chain runs to 402 residues: Multidrug resistance protein MdtH (402 aa).

Over 1–12 (MSRVSQARNLGK) the chain is Cytoplasmic. A helical transmembrane segment spans residues 13–33 (YFLLIDNMLVVLGFFVVFPLI). The Periplasmic segment spans residues 34–98 (SIRFVDQMGW…GFATMGIAHE (65 aa)). A helical transmembrane segment spans residues 99-116 (PWLLWFSCLLSGLGGTLF). The Cytoplasmic portion of the chain corresponds to 117–138 (DPPRSALVVKLIRPQQRGRFFS). A helical membrane pass occupies residues 139–159 (LLMMQDSAGAVIGALLGSWLL). The Periplasmic portion of the chain corresponds to 160–164 (QYDFR). A helical membrane pass occupies residues 165–185 (LVCATGAVLFVLCAAFNAWLL). The Cytoplasmic portion of the chain corresponds to 186 to 213 (PAWKLSTVRTPVREGMTRVMRDKRFVTY). Residues 214–234 (VLTLAGYYMLAVQVMLMLPIM) traverse the membrane as a helical segment. The Periplasmic segment spans residues 235–243 (VNDVAGAPS). A helical membrane pass occupies residues 244–264 (AVKWMYAIEACLSLTLLYPIA). Over 265–276 (RWSEKHFRLEHR) the chain is Cytoplasmic. The chain crosses the membrane as a helical span at residues 277 to 297 (LMAGLLIMSLSMMPVGMVSGL). The Periplasmic portion of the chain corresponds to 298 to 299 (QQ). The chain crosses the membrane as a helical span at residues 300-320 (LFTLICLFYIGSIIAEPARET). Topologically, residues 321 to 339 (LSASLADARARGSYMGFSR) are cytoplasmic. A helical membrane pass occupies residues 340-360 (LGLAIGGAIGYIGGGWLFDLG). The Periplasmic segment spans residues 361-367 (KSVHQPE). A helical transmembrane segment spans residues 368-388 (LPWMMLGIIGIFTFLALGWQF). Over 389 to 402 (SQKRAARRLLERDA) the chain is Cytoplasmic.

The protein belongs to the major facilitator superfamily. DHA1 family. MdtH (TC 2.A.1.2.21) subfamily.

The protein resides in the cell inner membrane. Its function is as follows. Confers resistance to norfloxacin and enoxacin. The chain is Multidrug resistance protein MdtH from Escherichia coli O157:H7.